Consider the following 360-residue polypeptide: Aminomethyltransferase (360 aa).

Belongs to the GcvT family. In terms of assembly, the glycine cleavage system is composed of four proteins: P, T, L and H.

The enzyme catalyses N(6)-[(R)-S(8)-aminomethyldihydrolipoyl]-L-lysyl-[protein] + (6S)-5,6,7,8-tetrahydrofolate = N(6)-[(R)-dihydrolipoyl]-L-lysyl-[protein] + (6R)-5,10-methylene-5,6,7,8-tetrahydrofolate + NH4(+). Functionally, the glycine cleavage system catalyzes the degradation of glycine. The chain is Aminomethyltransferase from Legionella pneumophila subsp. pneumophila (strain Philadelphia 1 / ATCC 33152 / DSM 7513).